An 868-amino-acid chain; its full sequence is Muscle, skeletal receptor tyrosine protein kinase (868 aa).

The N-terminal stretch at 1–21 is a signal peptide; sequence MRELVNIPLLQMLTLVAFSGT. Over 22 to 494 the chain is Extracellular; the sequence is EKLPKAPVIT…FAVSPAYSMT (473 aa). Ig-like domains lie at 28-116, 121-205, and 212-302; these read PVIT…GALQ, PKIT…KLVK, and ARIL…ATVS. Intrachain disulfides connect cysteine 49-cysteine 99, cysteine 98-cysteine 112, and cysteine 142-cysteine 190. N-linked (GlcNAc...) asparagine glycosylation occurs at asparagine 222. Cystine bridges form between cysteine 233–cysteine 282, cysteine 317–cysteine 382, cysteine 325–cysteine 375, cysteine 366–cysteine 406, cysteine 394–cysteine 447, and cysteine 398–cysteine 434. In terms of domain architecture, FZ spans 312–450; the sequence is ESKGYCAQYR…HQDPTACTRL (139 aa). Residue asparagine 338 is glycosylated (N-linked (GlcNAc...) asparagine). A glycan (N-linked (GlcNAc...) asparagine) is linked at asparagine 459. A helical membrane pass occupies residues 495-515; sequence VIISIMSCFAVFALLTITTLY. The Cytoplasmic segment spans residues 516–868; sequence CCRRRREWKN…CERAEGTVGV (353 aa). Residue tyrosine 553 is modified to Phosphotyrosine; by autocatalysis. The region spanning 574 to 855 is the Protein kinase domain; it reads IEYVRDIGEG…PSFCSIHRIL (282 aa). ATP-binding positions include 580–588 and lysine 608; that span reads IGEGAFGRV. 2 positions are modified to phosphoserine; by CK2: serine 680 and serine 697. The active-site Proton acceptor is aspartate 724. Phosphotyrosine; by autocatalysis is present on tyrosine 754.

This sequence belongs to the protein kinase superfamily. Tyr protein kinase family. Monomer. Homodimer. Interacts with LRP4; the heterodimer forms an AGRIN receptor complex that binds AGRIN resulting in activation of MUSK. Forms a heterotetramer composed of 2 DOK7 and 2 MUSK molecules which facilitates MUSK trans-autophosphorylation on tyrosine residue and activation. Interacts (via cytoplasmic part) with DOK7 (via IRS-type PTB domain); requires MUSK phosphorylation. Interacts with DVL1 (via DEP domain); the interaction is direct and mediates the formation of a DVL1, MUSK and PAK1 ternary complex involved in AChR clustering. Interacts with PDZRN3; this interaction is enhanced by agrin. Interacts with FNTA; the interaction is direct and mediates AGRIN-induced phosphorylation and activation of FNTA. Interacts with CSNK2B; mediates regulation by CK2. Interacts (via the cytoplasmic domain) with DNAJA3. Interacts with NSF; may regulate MUSK endocytosis and activity. Interacts with CAV3; may regulate MUSK signaling. Interacts with RNF31. Interacts with DOK7. Requires Mg(2+) as cofactor. Post-translationally, ubiquitinated by PDZRN3. Ubiquitination promotes endocytosis and lysosomal degradation. Phosphorylated. Phosphorylation is induced by AGRIN in a LRP4-dependent manner. Autophosphorylated. Autophosphorylation at Tyr-553 is required for interaction with DOK7 which in turn stimulates the phosphorylation and the activation of MUSK. In terms of processing, neddylated. Muscle specific.

It is found in the postsynaptic cell membrane. It catalyses the reaction L-tyrosyl-[protein] + ATP = O-phospho-L-tyrosyl-[protein] + ADP + H(+). Its activity is regulated as follows. Positively regulated by CK2. Receptor tyrosine kinase which plays a central role in the formation and the maintenance of the neuromuscular junction (NMJ), the synapse between the motor neuron and the skeletal muscle. Recruitment of AGRIN by LRP4 to the MUSK signaling complex induces phosphorylation and activation of MUSK, the kinase of the complex. The activation of MUSK in myotubes regulates the formation of NMJs through the regulation of different processes including the specific expression of genes in subsynaptic nuclei, the reorganization of the actin cytoskeleton and the clustering of the acetylcholine receptors (AChR) in the postsynaptic membrane. May regulate AChR phosphorylation and clustering through activation of ABL1 and Src family kinases which in turn regulate MUSK. DVL1 and PAK1 that form a ternary complex with MUSK are also important for MUSK-dependent regulation of AChR clustering. May positively regulate Rho family GTPases through FNTA. Mediates the phosphorylation of FNTA which promotes prenylation, recruitment to membranes and activation of RAC1 a regulator of the actin cytoskeleton and of gene expression. Other effectors of the MUSK signaling include DNAJA3 which functions downstream of MUSK. May also play a role within the central nervous system by mediating cholinergic responses, synaptic plasticity and memory formation. The chain is Muscle, skeletal receptor tyrosine protein kinase (Musk) from Rattus norvegicus (Rat).